The chain runs to 829 residues: Leucine--tRNA ligase (829 aa).

The 'HIGH' region motif lies at 42 to 52; that stretch reads PYPSGRIHMGH. The 'KMSKS' region signature appears at 584–588; the sequence is KMSKS. Lysine 587 provides a ligand contact to ATP.

Belongs to the class-I aminoacyl-tRNA synthetase family.

The protein localises to the cytoplasm. It carries out the reaction tRNA(Leu) + L-leucine + ATP = L-leucyl-tRNA(Leu) + AMP + diphosphate. The chain is Leucine--tRNA ligase from Syntrophobacter fumaroxidans (strain DSM 10017 / MPOB).